The chain runs to 133 residues: UPF0102 protein Plav_3586 (133 aa).

Belongs to the UPF0102 family.

This chain is UPF0102 protein Plav_3586, found in Parvibaculum lavamentivorans (strain DS-1 / DSM 13023 / NCIMB 13966).